Reading from the N-terminus, the 473-residue chain is Dol-P-Glc:Glc(2)Man(9)GlcNAc(2)-PP-Dol alpha-1,2-glucosyltransferase (473 aa).

The Cytoplasmic portion of the chain corresponds to 1-6 (MAQLEG). A helical transmembrane segment spans residues 7–27 (YYFSAALSCTFLVSCLLFSAF). Residues 28–64 (SRALREPYMDEIFHLPQAQRYCEGHFSLSQWDPMITT) lie on the Extracellular side of the membrane. Residues 65 to 85 (LPGLYLVSIGVIKPAIWIFGW) traverse the membrane as a helical segment. Topologically, residues 86–97 (SEHVVCSIGMLR) are cytoplasmic. Residues 98–118 (FVNLLFSVGNFYLLYLLFCKV) form a helical membrane-spanning segment. Residues 119–130 (QPRNKAASSIQR) are Extracellular-facing. The next 2 helical transmembrane spans lie at 131-151 (VLST…FLYY) and 152-172 (TEAG…YGNH). Over 173 to 175 (KTS) the chain is Extracellular. The chain crosses the membrane as a helical span at residues 176–196 (AFLGFCGFMFRQTNIIWAVFC). Topologically, residues 197–249 (AGNVIAQKLTEAWKTELQKKEDRLPPIKGPFAEFRKILQFLLAYSMSFKNLSM) are cytoplasmic. Residues 250–270 (LLLLTWPYILLGFLFCAFVVV) form a helical membrane-spanning segment. The Extracellular segment spans residues 271–283 (NGGIVIGDRSSHE). A helical transmembrane segment spans residues 284-304 (ACLHFPQLFYFFSFTLFFSFP). Residues 305 to 323 (HLLSPSKIKTFLSLVWKRR) lie on the Cytoplasmic side of the membrane. The chain crosses the membrane as a helical span at residues 324–344 (ILFFVVTLVSVFLVWKFTYAH). Residues 345 to 367 (KYLLADNRHYTFYVWKRVFQRYE) are Extracellular-facing. Residues 368–388 (TVKYLLVPAYIFAGWSIADSL) traverse the membrane as a helical segment. Topologically, residues 389–392 (KSKS) are cytoplasmic. A helical membrane pass occupies residues 393–413 (IFWNLMFFICLFTVIVPQKLL). Topologically, residues 414-436 (EFRYFILPYVIYRLNIPLPPTSR) are extracellular. Residues 437 to 457 (LICELSCYAVVNFITFFIFLN) traverse the membrane as a helical segment. The Cytoplasmic segment spans residues 458–473 (KTFQWPNSQDIQRFMW).

This sequence belongs to the ALG10 glucosyltransferase family.

The protein localises to the endoplasmic reticulum membrane. It carries out the reaction an alpha-D-Glc-(1-&gt;3)-alpha-D-Glc-(1-&gt;3)-alpha-D-Man-(1-&gt;2)-alpha-D-Man-(1-&gt;2)-alpha-D-Man-(1-&gt;3)-[alpha-D-Man-(1-&gt;2)-alpha-D-Man-(1-&gt;3)-[alpha-D-Man-(1-&gt;2)-alpha-D-Man-(1-&gt;6)]-alpha-D-Man-(1-&gt;6)]-beta-D-Man-(1-&gt;4)-beta-D-GlcNAc-(1-&gt;4)-alpha-D-GlcNAc-diphospho-di-trans,poly-cis-dolichol + a di-trans,poly-cis-dolichyl beta-D-glucosyl phosphate = a alpha-D-Glc-(1-&gt;2)-alpha-D-Glc-(1-&gt;3)-alpha-D-Glc-(1-&gt;3)-alpha-D-Man-(1-&gt;2)-alpha-D-Man-(1-&gt;2)-alpha-D-Man-(1-&gt;3)-[alpha-D-Man-(1-&gt;2)-alpha-D-Man-(1-&gt;3)-[alpha-D-Man-(1-&gt;2)-alpha-D-Man-(1-&gt;6)]-alpha-D-Man-(1-&gt;6)]-beta-D-Man-(1-&gt;4)-beta-D-GlcNAc-(1-&gt;4)-alpha-D-GlcNAc-diphospho-di-trans,poly-cis-dolichol + a di-trans,poly-cis-dolichyl phosphate + H(+). It participates in protein modification; protein glycosylation. In terms of biological role, dol-P-Glc:Glc(2)Man(9)GlcNAc(2)-PP-Dol alpha-1,2-glucosyltransferase that operates in the biosynthetic pathway of dolichol-linked oligosaccharides, the glycan precursors employed in protein asparagine (N)-glycosylation. The assembly of dolichol-linked oligosaccharides begins on the cytosolic side of the endoplasmic reticulum membrane and finishes in its lumen. The sequential addition of sugars to dolichol pyrophosphate produces dolichol-linked oligosaccharides containing fourteen sugars, including two GlcNAcs, nine mannoses and three glucoses. Once assembled, the oligosaccharide is transferred from the lipid to nascent proteins by oligosaccharyltransferases. In the lumen of the endoplasmic reticulum, adds the third and last glucose residue from dolichyl phosphate glucose (Dol-P-Glc) onto the lipid-linked oligosaccharide intermediate Glc(2)Man(9)GlcNAc(2)-PP-Dol to produce Glc(3)Man(9)GlcNAc(2)-PP-Dol. The chain is Dol-P-Glc:Glc(2)Man(9)GlcNAc(2)-PP-Dol alpha-1,2-glucosyltransferase from Homo sapiens (Human).